A 365-amino-acid polypeptide reads, in one-letter code: P2Y purinoceptor 4 (365 aa).

At 1–34 (MASTESSLLRSLGLSPGPGSSEVELDCWFDEDFK) the chain is on the extracellular side. The helical transmembrane segment at 35–61 (FILLPVSYAVVFVLGLGLNAPTLWLFI) threads the bilayer. Residues 62 to 72 (FRLRPWDATAT) lie on the Cytoplasmic side of the membrane. Residues 73–95 (YMFHLALSDTLYVLSLPTLIYYY) traverse the membrane as a helical segment. Residues 96-112 (AAHNHWPFGTEICKFVR) lie on the Extracellular side of the membrane. Cysteines 108 and 185 form a disulfide. The chain crosses the membrane as a helical span at residues 113–131 (FLFYWNLYCSVLFLTCISV). Residues 132 to 154 (HRYLGICHPLRALRWGRPRLAGL) lie on the Cytoplasmic side of the membrane. The helical transmembrane segment at 155–174 (LCLAVWLVVAGCLVPNLFFV) threads the bilayer. Topologically, residues 175-196 (TTSNKGTTVLCHDTTRPEEFDH) are extracellular. Residues 197–222 (YVHFSSAVMGLLFGVPCLVTLVCYGL) traverse the membrane as a helical segment. Over 223–246 (MARRLYQPLPGSAQSSSRLRSLRT) the chain is Cytoplasmic. A helical transmembrane segment spans residues 247 to 269 (IAVVLTVFAVCFVPFHITRTIYY). The Extracellular segment spans residues 270 to 287 (LARLLEADCRVLNIVNVV). Residues 288–309 (YKVTRPLASANSCLDPVLYLLT) form a helical membrane-spanning segment. Topologically, residues 310–365 (GDKYRRQLRQLCGGGKPQPRTAASSLALVSLPEDSSCRWAATPQDSSCSTPRADRL) are cytoplasmic. Ser-333 and Ser-334 each carry phosphoserine.

The protein belongs to the G-protein coupled receptor 1 family. Phosphorylation of Ser-333 and Ser-334 is a key step in agonist-dependent desensitization and loss of surface P2RY4. This phosphorylation does not involve PKC, nor other calcium activated kinases. In terms of tissue distribution, pancreas.

It is found in the cell membrane. Receptor for UTP and UDP coupled to G-proteins that activate a phosphatidylinositol-calcium second messenger system. Not activated by ATP or ADP. The polypeptide is P2Y purinoceptor 4 (P2RY4) (Homo sapiens (Human)).